The following is a 510-amino-acid chain: Maturase K (510 aa).

It belongs to the intron maturase 2 family. MatK subfamily.

It localises to the plastid. The protein localises to the chloroplast. Usually encoded in the trnK tRNA gene intron. Probably assists in splicing its own and other chloroplast group II introns. This chain is Maturase K, found in Spirodela intermedia (Intermediate duckweed).